A 1255-amino-acid chain; its full sequence is Stress response protein NST1 (1255 aa).

Residues 1–19 are compositionally biased toward pro residues; that stretch reads MKGNRNPPPPPSGPVPPSP. 5 disordered regions span residues 1–214, 285–379, 470–525, 563–898, and 956–1080; these read MKGN…SQEE, NHPN…SEEL, RAYD…RMEE, EAEN…PPMG, and HPPP…PPFG. The span at 50–61 shows a compositional bias: low complexity; sequence PSPTASSLAAKP. Residues 76–86 are compositionally biased toward basic residues; it reads NRKKQKRRAKA. The span at 87 to 96 shows a compositional bias: low complexity; that stretch reads AAKAAAERAQ. Acidic residues predominate over residues 118–127; the sequence is ADPEDDEDEP. The segment covering 151–162 has biased composition (basic residues); sequence KSKKSKKKKKKN. Over residues 187–196 the composition is skewed to pro residues; the sequence is PILPPPPPQQ. Positions 201–214 are enriched in basic and acidic residues; sequence MSREKIWNTNSQEE. The segment covering 330 to 376 has biased composition (acidic residues); that stretch reads ELEGDEEEEEVEAEAEDDGEGDEEGEDVYSEDELEDDMYSEEEQEPS. The segment covering 470–481 has biased composition (basic and acidic residues); that stretch reads RAYDHPNGERYV. Positions 488–518 are enriched in acidic residues; the sequence is PDEEEFEDEEEEYEEDDEEEYNSPDEEDTMT. Residues 547–745 are a coiled coil; it reads REKVAKERQA…ERRKKEERAA (199 aa). 2 stretches are compositionally biased toward basic and acidic residues: residues 590-630 and 637-745; these read KKEA…AEEK and QRKA…ERAA. Positions 770 to 780 are enriched in pro residues; that stretch reads PPAPPVAPVPV. Positions 811–835 are enriched in low complexity; that stretch reads QTSQQDGSTASSGAASNSGSMASQN. 2 stretches are compositionally biased toward polar residues: residues 865–877 and 983–1004; these read QGSA…SASP and RDNQ…QPIS. The segment covering 1067–1080 has biased composition (pro residues); it reads GPRPAPGFPMPPFG.

The protein belongs to the NST1 family.

Its subcellular location is the cytoplasm. In terms of biological role, may act as a negative regulator of salt tolerance. The polypeptide is Stress response protein NST1 (NST1) (Chaetomium globosum (strain ATCC 6205 / CBS 148.51 / DSM 1962 / NBRC 6347 / NRRL 1970) (Soil fungus)).